Consider the following 540-residue polypeptide: 2,3-bisphosphoglycerate-independent phosphoglycerate mutase (540 aa).

Residues Asp24 and Ser74 each contribute to the Mn(2+) site. The active-site Phosphoserine intermediate is Ser74. Residues His135, 165–166 (RD), Arg197, Arg203, 268–271 (RPDR), and Lys341 each bind substrate. Residues Asp408, His412, Asp449, His450, and His467 each coordinate Mn(2+).

This sequence belongs to the BPG-independent phosphoglycerate mutase family. In terms of assembly, monomer. Requires Mn(2+) as cofactor.

The catalysed reaction is (2R)-2-phosphoglycerate = (2R)-3-phosphoglycerate. Its pathway is carbohydrate degradation; glycolysis; pyruvate from D-glyceraldehyde 3-phosphate: step 3/5. In terms of biological role, catalyzes the interconversion of 2-phosphoglycerate and 3-phosphoglycerate. The chain is 2,3-bisphosphoglycerate-independent phosphoglycerate mutase from Prochlorococcus marinus (strain MIT 9303).